Reading from the N-terminus, the 609-residue chain is Glutamine--fructose-6-phosphate aminotransferase [isomerizing] (609 aa).

Catalysis depends on cysteine 2, which acts as the Nucleophile; for GATase activity. The 217-residue stretch at 2–218 (CGIVGAIAQR…EGDIAEITRR (217 aa)) folds into the Glutamine amidotransferase type-2 domain. 2 consecutive SIS domains span residues 286 to 426 (ADEL…LKGL) and 458 to 599 (LAED…VDQP). The active-site For Fru-6P isomerization activity is lysine 604.

In terms of assembly, homodimer.

The protein localises to the cytoplasm. It carries out the reaction D-fructose 6-phosphate + L-glutamine = D-glucosamine 6-phosphate + L-glutamate. Its function is as follows. Catalyzes the first step in hexosamine metabolism, converting fructose-6P into glucosamine-6P using glutamine as a nitrogen source. The chain is Glutamine--fructose-6-phosphate aminotransferase [isomerizing] from Salmonella paratyphi A (strain ATCC 9150 / SARB42).